A 129-amino-acid polypeptide reads, in one-letter code: Aspartate 1-decarboxylase (129 aa).

The Schiff-base intermediate with substrate; via pyruvic acid role is filled by S25. At S25 the chain carries Pyruvic acid (Ser). T57 contributes to the substrate binding site. Y58 serves as the catalytic Proton donor. Position 73 to 75 (73 to 75) interacts with substrate; the sequence is GAA.

Belongs to the PanD family. In terms of assembly, heterooctamer of four alpha and four beta subunits. Requires pyruvate as cofactor. In terms of processing, is synthesized initially as an inactive proenzyme, which is activated by self-cleavage at a specific serine bond to produce a beta-subunit with a hydroxyl group at its C-terminus and an alpha-subunit with a pyruvoyl group at its N-terminus.

It is found in the cytoplasm. It carries out the reaction L-aspartate + H(+) = beta-alanine + CO2. Its pathway is cofactor biosynthesis; (R)-pantothenate biosynthesis; beta-alanine from L-aspartate: step 1/1. Functionally, catalyzes the pyruvoyl-dependent decarboxylation of aspartate to produce beta-alanine. This chain is Aspartate 1-decarboxylase, found in Hydrogenovibrio crunogenus (strain DSM 25203 / XCL-2) (Thiomicrospira crunogena).